Here is a 299-residue protein sequence, read N- to C-terminus: 4-hydroxybenzoate octaprenyltransferase (299 aa).

8 helical membrane-spanning segments follow: residues 33–53 (VGFL…ADGV), 56–76 (WWTL…GCVI), 105–125 (NALL…LTMN), 151–171 (LPQV…FAAI), 180–200 (WLLY…YAMV), 214–234 (AILF…LMLL), 247–267 (HTYW…FIIA), and 278–298 (AFMH…LATT).

The protein belongs to the UbiA prenyltransferase family. Requires Mg(2+) as cofactor.

Its subcellular location is the cell inner membrane. The catalysed reaction is all-trans-octaprenyl diphosphate + 4-hydroxybenzoate = 4-hydroxy-3-(all-trans-octaprenyl)benzoate + diphosphate. Its pathway is cofactor biosynthesis; ubiquinone biosynthesis. In terms of biological role, catalyzes the prenylation of para-hydroxybenzoate (PHB) with an all-trans polyprenyl group. Mediates the second step in the final reaction sequence of ubiquinone-8 (UQ-8) biosynthesis, which is the condensation of the polyisoprenoid side chain with PHB, generating the first membrane-bound Q intermediate 3-octaprenyl-4-hydroxybenzoate. This chain is 4-hydroxybenzoate octaprenyltransferase, found in Xylella fastidiosa (strain M23).